We begin with the raw amino-acid sequence, 73 residues long: Translation initiation factor IF-1 (73 aa).

The 73-residue stretch at 1–73 (MPKKDGAIEI…SRGRIVYRYK (73 aa)) folds into the S1-like domain.

It belongs to the IF-1 family. As to quaternary structure, component of the 30S ribosomal translation pre-initiation complex which assembles on the 30S ribosome in the order IF-2 and IF-3, IF-1 and N-formylmethionyl-tRNA(fMet); mRNA recruitment can occur at any time during PIC assembly.

It is found in the cytoplasm. Functionally, one of the essential components for the initiation of protein synthesis. Stabilizes the binding of IF-2 and IF-3 on the 30S subunit to which N-formylmethionyl-tRNA(fMet) subsequently binds. Helps modulate mRNA selection, yielding the 30S pre-initiation complex (PIC). Upon addition of the 50S ribosomal subunit IF-1, IF-2 and IF-3 are released leaving the mature 70S translation initiation complex. The polypeptide is Translation initiation factor IF-1 (Frankia alni (strain DSM 45986 / CECT 9034 / ACN14a)).